The primary structure comprises 681 residues: DNA-directed RNA polymerase subunit beta' (681 aa).

Positions 69, 71, 87, and 90 each coordinate Zn(2+). Mg(2+) contacts are provided by Asp-489, Asp-491, and Asp-493.

This sequence belongs to the RNA polymerase beta' chain family. RpoC1 subfamily. In plastids the minimal PEP RNA polymerase catalytic core is composed of four subunits: alpha, beta, beta', and beta''. When a (nuclear-encoded) sigma factor is associated with the core the holoenzyme is formed, which can initiate transcription. The cofactor is Mg(2+). It depends on Zn(2+) as a cofactor.

It is found in the plastid. The protein localises to the chloroplast. It carries out the reaction RNA(n) + a ribonucleoside 5'-triphosphate = RNA(n+1) + diphosphate. Functionally, DNA-dependent RNA polymerase catalyzes the transcription of DNA into RNA using the four ribonucleoside triphosphates as substrates. The polypeptide is DNA-directed RNA polymerase subunit beta' (Solanum bulbocastanum (Wild potato)).